Here is a 378-residue protein sequence, read N- to C-terminus: 4-hydroxy-3-methylbut-2-en-1-yl diphosphate synthase (flavodoxin) (378 aa).

The [4Fe-4S] cluster site is built by cysteine 268, cysteine 271, cysteine 303, and glutamate 310. Residues 359 to 378 form a disordered region; it reads AEREKEKEKEKEKEKETQEQ.

The protein belongs to the IspG family. [4Fe-4S] cluster serves as cofactor.

The catalysed reaction is (2E)-4-hydroxy-3-methylbut-2-enyl diphosphate + oxidized [flavodoxin] + H2O + 2 H(+) = 2-C-methyl-D-erythritol 2,4-cyclic diphosphate + reduced [flavodoxin]. Its pathway is isoprenoid biosynthesis; isopentenyl diphosphate biosynthesis via DXP pathway; isopentenyl diphosphate from 1-deoxy-D-xylulose 5-phosphate: step 5/6. Converts 2C-methyl-D-erythritol 2,4-cyclodiphosphate (ME-2,4cPP) into 1-hydroxy-2-methyl-2-(E)-butenyl 4-diphosphate. The chain is 4-hydroxy-3-methylbut-2-en-1-yl diphosphate synthase (flavodoxin) from Bacillus cereus (strain ZK / E33L).